The primary structure comprises 428 residues: tRNA(Ile2) 2-agmatinylcytidine synthetase TiaS (428 aa).

It belongs to the TiaS family.

Its subcellular location is the cytoplasm. It catalyses the reaction cytidine(34) in tRNA(Ile2) + agmatine + ATP + H2O = 2-agmatinylcytidine(34) in tRNA(Ile2) + AMP + 2 phosphate + 2 H(+). Functionally, ATP-dependent agmatine transferase that catalyzes the formation of 2-agmatinylcytidine (agm2C) at the wobble position (C34) of tRNA(Ile2), converting the codon specificity from AUG to AUA. The polypeptide is tRNA(Ile2) 2-agmatinylcytidine synthetase TiaS (Methanosarcina acetivorans (strain ATCC 35395 / DSM 2834 / JCM 12185 / C2A)).